We begin with the raw amino-acid sequence, 178 residues long: PEST proteolytic signal-containing nuclear protein (178 aa).

Basic and acidic residues predominate over residues M1–Q15. Positions M1–S84 are disordered. Residue A2 is modified to N-acetylalanine. Residues S37–R47 show a composition bias toward low complexity. S53 carries the post-translational modification Phosphoserine. K64 bears the N6-acetyllysine mark. A phosphoserine mark is found at S77, S87, and S119. Positions N134 to N178 are disordered. At T139 the chain carries Phosphothreonine. The segment covering T139 to N149 has biased composition (polar residues). Phosphoserine is present on S147. N6-acetyllysine occurs at positions 150 and 152. A compositionally biased stretch (basic and acidic residues) spans K160 to N178.

Interacts with UHRF2/NIRF. Post-translationally, ubiquitinated; mediated by UHRF2 and leading to its subsequent proteasomal degradation. In terms of processing, N-terminally acetylated in a HYPK-dependent manner by the NatA acetyltransferase complex which is composed of NAA10 and NAA15.

The protein resides in the nucleus. In terms of biological role, may be involved in cell cycle regulation. In Bos taurus (Bovine), this protein is PEST proteolytic signal-containing nuclear protein (PCNP).